The primary structure comprises 214 residues: Adenylate kinase (214 aa).

10–15 (GAGKGT) serves as a coordination point for ATP. An NMP region spans residues 30–59 (STGDMLRAAIKAGTELGKQAKSVIDAGQLV). Residues threonine 31, arginine 36, 57 to 59 (QLV), 85 to 88 (GFPR), and glutamine 92 contribute to the AMP site. An LID region spans residues 122 to 159 (GRRAHLASGRTYHNVYNPPKVEGKDDVTGEDLVIREDD). Residues arginine 123 and 132–133 (TY) contribute to the ATP site. Residues arginine 156 and arginine 167 each contribute to the AMP site. Lysine 200 contacts ATP.

The protein belongs to the adenylate kinase family. As to quaternary structure, monomer.

It is found in the cytoplasm. It catalyses the reaction AMP + ATP = 2 ADP. It functions in the pathway purine metabolism; AMP biosynthesis via salvage pathway; AMP from ADP: step 1/1. Its function is as follows. Catalyzes the reversible transfer of the terminal phosphate group between ATP and AMP. Plays an important role in cellular energy homeostasis and in adenine nucleotide metabolism. This chain is Adenylate kinase, found in Photobacterium profundum (strain SS9).